The following is a 293-amino-acid chain: 33 kDa chaperonin (293 aa).

2 disulfides stabilise this stretch: Cys231–Cys233 and Cys264–Cys267.

The protein belongs to the HSP33 family. In terms of processing, under oxidizing conditions two disulfide bonds are formed involving the reactive cysteines. Under reducing conditions zinc is bound to the reactive cysteines and the protein is inactive.

The protein localises to the cytoplasm. Redox regulated molecular chaperone. Protects both thermally unfolding and oxidatively damaged proteins from irreversible aggregation. Plays an important role in the bacterial defense system toward oxidative stress. In Yersinia pseudotuberculosis serotype O:1b (strain IP 31758), this protein is 33 kDa chaperonin.